Here is a 301-residue protein sequence, read N- to C-terminus: Nucleosome assembly protein 1;3 (301 aa).

Positions 15–69 form a coiled coil; it reads VETLKNKLQALAEQHVDVLESLAPVVRKRVDVLIEIQSQHDELEAKFLEEKSALE. Residues 36–51 carry the Nuclear export signal motif; sequence LAPVVRKRVDVLIEIQ. Residues 279-301 are disordered; sequence EDYGASWVDDEEDDDDEYSDEEA. Residue S297 is modified to Phosphoserine; by CK2.

It belongs to the nucleosome assembly protein (NAP) family.

Its subcellular location is the nucleus. It localises to the cytoplasm. In terms of biological role, may modulate chromatin structure by regulation of nucleosome assembly/disassembly. This Oryza sativa subsp. indica (Rice) protein is Nucleosome assembly protein 1;3 (NAP1;3).